The primary structure comprises 559 residues: Asparagine--tRNA ligase, cytoplasmic (559 aa).

S72 is modified (phosphoserine). Residues K255 and K501 each carry the N6-acetyllysine modification.

The protein belongs to the class-II aminoacyl-tRNA synthetase family.

Its subcellular location is the cytoplasm. It carries out the reaction tRNA(Asn) + L-asparagine + ATP = L-asparaginyl-tRNA(Asn) + AMP + diphosphate + H(+). In Bos taurus (Bovine), this protein is Asparagine--tRNA ligase, cytoplasmic (NARS).